Here is a 256-residue protein sequence, read N- to C-terminus: NAP1-related protein 1 (256 aa).

Residues 23–64 (IDAELVLSIEKLQEIQDDLEKINEKASDEVLEVEQKYNVIRK) adopt a coiled-coil conformation. Residues 220-256 (LTYFNNDADEEDFDGDDDGDEEGEEDDDDEEEEDGEE) are disordered. The span at 226–256 (DADEEDFDGDDDGDEEGEEDDDDEEEEDGEE) shows a compositional bias: acidic residues.

It belongs to the nucleosome assembly protein (NAP) family. Can form homomeric and heteromeric protein complexes with NRP2. Binds histones H2A and H2B and associates with chromatin in vivo. Ubiquitous.

Its subcellular location is the cytoplasm. The protein resides in the nucleus. Functionally, acts as a histone H2A/H2B chaperone in nucleosome assembly, playing a critical role for the correct expression of genes involved in root proliferation and patterning. Required with NRP2 for the maintenance of cell proliferation and differentiation in postembryonic root growth. Involved in both intramolecular and intermolecular somatic homologous recombination. The sequence is that of NAP1-related protein 1 (NRP1) from Arabidopsis thaliana (Mouse-ear cress).